The primary structure comprises 323 residues: Lipid A biosynthesis myristoyltransferase (323 aa).

Residues 23-43 form a helical membrane-spanning segment; sequence YWGAWLGVAAMAGIALTPPKF. The HXXXXD motif signature appears at 139–144; sequence HGWAVD.

Belongs to the LpxL/LpxM/LpxP family. LpxM subfamily.

It localises to the cell inner membrane. It catalyses the reaction alpha-Kdo-(2-&gt;4)-alpha-Kdo-(2-&gt;6)-(dodecanoyl)-lipid IVA (E. coli) + tetradecanoyl-[ACP] = alpha-Kdo-(2-&gt;4)-alpha-Kdo-(2-&gt;6)-lipid A (E. coli) + holo-[ACP]. The enzyme catalyses (9Z)-hexadecenoyl-(Kdo)2-lipid IVA (E. coli) + tetradecanoyl-[ACP] = ((9Z)-hexadecenoyl-tetradecanoyl)-(Kdo)2-lipid A + holo-[ACP]. Its pathway is glycolipid biosynthesis; KDO(2)-lipid A biosynthesis; KDO(2)-lipid A from CMP-3-deoxy-D-manno-octulosonate and lipid IV(A): step 4/4. It participates in bacterial outer membrane biogenesis; lipopolysaccharide biosynthesis. Its function is as follows. Catalyzes the transfer of myristate from myristoyl-[acyl-carrier-protein] (ACP) to Kdo(2)-(lauroyl)-lipid IV(A) to form Kdo(2)-lipid A. Can probably also catalyze the transfer of myristate to Kdo(2)-(palmitoleoyl)-lipid IV(A) to form the cold-adapted Kdo(2)-lipid A. In vitro, can acylate Kdo(2)-lipid IV(A), but acylation of (KDO)2-(lauroyl)-lipid IV(A) is about 100 times faster. In vitro, can use lauroyl-ACP but displays a slight kinetic preference for myristoyl-ACP. This is Lipid A biosynthesis myristoyltransferase from Escherichia coli (strain K12).